The sequence spans 161 residues: Phosphopantetheine adenylyltransferase (161 aa).

Threonine 9 contributes to the substrate binding site. Residues 9–10 (TF) and histidine 17 contribute to the ATP site. Residues lysine 41, leucine 73, and arginine 87 each contribute to the substrate site. ATP is bound by residues 88-90 (GLR), glutamate 98, and 123-129 (YQFISGT).

It belongs to the bacterial CoaD family. As to quaternary structure, homohexamer. Mg(2+) is required as a cofactor.

The protein localises to the cytoplasm. The catalysed reaction is (R)-4'-phosphopantetheine + ATP + H(+) = 3'-dephospho-CoA + diphosphate. It participates in cofactor biosynthesis; coenzyme A biosynthesis; CoA from (R)-pantothenate: step 4/5. In terms of biological role, reversibly transfers an adenylyl group from ATP to 4'-phosphopantetheine, yielding dephospho-CoA (dPCoA) and pyrophosphate. The sequence is that of Phosphopantetheine adenylyltransferase from Cupriavidus pinatubonensis (strain JMP 134 / LMG 1197) (Cupriavidus necator (strain JMP 134)).